The chain runs to 478 residues: DNA gyrase subunit B (478 aa).

In terms of domain architecture, Toprim spans 319-438; it reads CELYLVEGDS…GGHVYIAQPP (120 aa). Glu-325, Asp-403, and Asp-405 together coordinate Mg(2+).

This sequence belongs to the type II topoisomerase GyrB family. In terms of assembly, heterotetramer, composed of two GyrA and two GyrB chains. In the heterotetramer, GyrA contains the active site tyrosine that forms a transient covalent intermediate with DNA, while GyrB binds cofactors and catalyzes ATP hydrolysis. Mg(2+) serves as cofactor. Mn(2+) is required as a cofactor. Requires Ca(2+) as cofactor.

It is found in the cytoplasm. It carries out the reaction ATP-dependent breakage, passage and rejoining of double-stranded DNA.. Functionally, a type II topoisomerase that negatively supercoils closed circular double-stranded (ds) DNA in an ATP-dependent manner to modulate DNA topology and maintain chromosomes in an underwound state. Negative supercoiling favors strand separation, and DNA replication, transcription, recombination and repair, all of which involve strand separation. Also able to catalyze the interconversion of other topological isomers of dsDNA rings, including catenanes and knotted rings. Type II topoisomerases break and join 2 DNA strands simultaneously in an ATP-dependent manner. The polypeptide is DNA gyrase subunit B (gyrB) (Cytophaga hutchinsonii).